A 513-amino-acid chain; its full sequence is Cytochrome P450 monooxygenase sthF (513 aa).

2 consecutive transmembrane segments (helical) span residues Phe13–Ile33 and Met212–Leu232. Heme is bound at residue Cys452.

It belongs to the cytochrome P450 family. Heme is required as a cofactor.

The protein resides in the membrane. It catalyses the reaction dehydroprobetaenone I + NADPH + O2 + H(+) = epoxybetaenone + NADP(+) + H2O. The enzyme catalyses dehydroprobetaenone I + 3 NADPH + 3 O2 + 3 H(+) = betaenone C + 3 NADP(+) + 3 H2O. The catalysed reaction is probetaenone I + 3 NADPH + 3 O2 + 3 H(+) = betaenone B + 3 NADP(+) + 3 H2O. It participates in mycotoxin biosynthesis. Its function is as follows. Cytochrome P450 monooxygenase; part of the gene cluster that mediates the biosynthesis of the phytotoxin stemphyloxin II. The first step of the pathway is the synthesis of dehydroprobetaenone I by the polyketide synthase sthA and the enoyl reductase sthE via condensation of one acetyl-CoA starter unit with 7 malonyl-CoA units and 5 methylations. The C-terminal reductase (R) domain of sthA catalyzes the reductive release of the polyketide chain. Because sthA lacks a designated enoylreductase (ER) domain, the required activity is provided the enoyl reductase sthE. The short-chain dehydrogenase/reductase sthC then catalyzes reduction of dehydroprobetaenone I to probetaenone I. The cytochrome P450 monooxygenase sthF catalyzes successive epoxidation, oxidation (resulting from epoxide opening) and hydroxylation to install a tertiary alcohol in the decaline ring to yield betaenone C from dehydroprobetaenone I and betaenone B from probetaenone I. The FAD-linked oxidoreductase sthB is responsible for the conversion of betaenone C to betaenone A via an intramolecular aldol reaction between C-1 and C-17 to form the bridged tricyclic system in betaenone A. Finally, the cytochrome P450 monooxygenase sthD catalyzes the hydroxylation of C-15 to afford the final metabolite stemphyloxin II. The polypeptide is Cytochrome P450 monooxygenase sthF (Phaeosphaeria nodorum (strain SN15 / ATCC MYA-4574 / FGSC 10173) (Glume blotch fungus)).